The primary structure comprises 204 residues: MIGKLKGTIDEIGEDYVLVDVHGVCYVAHCSARTLSKLGSADEACVLFIETYVREDQLKLFGFMTALEREWFNLLQSVQGVGAKVALAVLSTLTPGELANAIALQDRAAVSRAPGVGPKVAMRLVTELKNRAPAFAGEAINIALKQELGEGVAAAPVADAVSALTNLGYSRDQAANAVAAAMKTAGDDADSAKLIRLGLKELAR.

The tract at residues 1 to 64 (MIGKLKGTID…EDQLKLFGFM (64 aa)) is domain I. The tract at residues 65–143 (TALEREWFNL…AFAGEAINIA (79 aa)) is domain II. The segment at 144-151 (LKQELGEG) is flexible linker. Residues 152–204 (VAAAPVADAVSALTNLGYSRDQAANAVAAAMKTAGDDADSAKLIRLGLKELAR) form a domain III region.

The protein belongs to the RuvA family. As to quaternary structure, homotetramer. Forms an RuvA(8)-RuvB(12)-Holliday junction (HJ) complex. HJ DNA is sandwiched between 2 RuvA tetramers; dsDNA enters through RuvA and exits via RuvB. An RuvB hexamer assembles on each DNA strand where it exits the tetramer. Each RuvB hexamer is contacted by two RuvA subunits (via domain III) on 2 adjacent RuvB subunits; this complex drives branch migration. In the full resolvosome a probable DNA-RuvA(4)-RuvB(12)-RuvC(2) complex forms which resolves the HJ.

It is found in the cytoplasm. Functionally, the RuvA-RuvB-RuvC complex processes Holliday junction (HJ) DNA during genetic recombination and DNA repair, while the RuvA-RuvB complex plays an important role in the rescue of blocked DNA replication forks via replication fork reversal (RFR). RuvA specifically binds to HJ cruciform DNA, conferring on it an open structure. The RuvB hexamer acts as an ATP-dependent pump, pulling dsDNA into and through the RuvAB complex. HJ branch migration allows RuvC to scan DNA until it finds its consensus sequence, where it cleaves and resolves the cruciform DNA. The polypeptide is Holliday junction branch migration complex subunit RuvA (Rhizobium leguminosarum bv. trifolii (strain WSM2304)).